We begin with the raw amino-acid sequence, 957 residues long: Bifunctional glutamine synthetase adenylyltransferase/adenylyl-removing enzyme (957 aa).

An adenylyl removase region spans residues 1-447 (MFSQLDFTGL…IFNQLIGEEE (447 aa)). Positions 454–957 (VNEQLAIWQD…IWQQIFTDNE (504 aa)) are adenylyl transferase.

Belongs to the GlnE family. The cofactor is Mg(2+).

It carries out the reaction [glutamine synthetase]-O(4)-(5'-adenylyl)-L-tyrosine + phosphate = [glutamine synthetase]-L-tyrosine + ADP. The enzyme catalyses [glutamine synthetase]-L-tyrosine + ATP = [glutamine synthetase]-O(4)-(5'-adenylyl)-L-tyrosine + diphosphate. Its function is as follows. Involved in the regulation of glutamine synthetase GlnA, a key enzyme in the process to assimilate ammonia. When cellular nitrogen levels are high, the C-terminal adenylyl transferase (AT) inactivates GlnA by covalent transfer of an adenylyl group from ATP to specific tyrosine residue of GlnA, thus reducing its activity. Conversely, when nitrogen levels are low, the N-terminal adenylyl removase (AR) activates GlnA by removing the adenylyl group by phosphorolysis, increasing its activity. The regulatory region of GlnE binds the signal transduction protein PII (GlnB) which indicates the nitrogen status of the cell. In Haemophilus ducreyi (strain 35000HP / ATCC 700724), this protein is Bifunctional glutamine synthetase adenylyltransferase/adenylyl-removing enzyme.